Reading from the N-terminus, the 827-residue chain is Inactive rhomboid protein 2 (827 aa).

Residues 1 to 87 (MDSTDKNGES…GFRRQASLSQ (87 aa)) are disordered. The Cytoplasmic segment spans residues 1 to 380 (MDSTDKNGES…HRPYFTYWLT (380 aa)). Residue Ser60 is modified to Phosphoserine. Residues 64–77 (QRGRWQEGSSEKRP) are compositionally biased toward basic and acidic residues. Residues Ser84, Ser88, Ser294, Ser296, and Ser299 each carry the phosphoserine modification. A helical membrane pass occupies residues 381–401 (FVHIIITLLVICTYGIAPVGF). At 402-631 (AQHVTTQLVL…PDQFYRLWLS (230 aa)) the chain is on the lumenal side. Residues 632 to 652 (LFLHAGVVHCLVSVVFQMTIL) traverse the membrane as a helical segment. Over 653–663 (RDLEKLAGWHR) the chain is Cytoplasmic. A helical membrane pass occupies residues 664–684 (IAIIFILSGITGNLASAIFLP). At 685–686 (YR) the chain is on the lumenal side. Residues 687-707 (AEVGPAGSQFGLLACLFVELF) form a helical membrane-spanning segment. The Cytoplasmic portion of the chain corresponds to 708 to 718 (QSWQLLERPWK). A helical membrane pass occupies residues 719–739 (AFLNLSAIVLFLFICGLLPWI). Over 740-744 (DNIAH) the chain is Lumenal. A helical membrane pass occupies residues 745–765 (IFGFLSGLLLAFAFLPYITFG). At 766–773 (TSDKYRKR) the chain is on the cytoplasmic side. A helical membrane pass occupies residues 774–794 (ALILVSLLVFAGLFASLVIWL). Topologically, residues 795–827 (YVYPINWPWIEYLTCFPFTSRFCEKYELDQVLH) are lumenal.

It belongs to the peptidase S54 family. Interacts with EGF. Interacts (via cytoplasmic N-terminus) with FRMD8/iTAP; this interaction leads to mutual protein stabilization. Interacts with ADAM17/TACE. Detected in retina and spleen.

It localises to the endoplasmic reticulum membrane. It is found in the cell membrane. Regulates ADAM17 protease, a sheddase of the epidermal growth factor (EGF) receptor ligands and TNF, thereby plays a role in sleep, cell survival, proliferation, migration and inflammation. Does not exhibit any protease activity on its own. This Canis lupus familiaris (Dog) protein is Inactive rhomboid protein 2 (RHBDF2).